The primary structure comprises 355 residues: Guanine nucleotide-binding protein alpha-12 subunit (355 aa).

The 328-residue stretch at 28 to 355 (RQINLLLLGS…EQNLKTLMMQ (328 aa)) folds into the G-alpha domain. The segment at 31 to 44 (NLLLLGSGESGKST) is G1 motif. GTP is bound by residues 36-43 (GSGESGKS), 176-182 (LFCRKAT), 201-205 (DVGGQ), 270-273 (NKND), and A327. Residues S43 and T182 each contribute to the Mg(2+) site. A G2 motif region spans residues 174–182 (DILFCRKAT). The tract at residues 197 to 206 (FRFIDVGGQR) is G3 motif. The G4 motif stretch occupies residues 266–273 (ILFMNKND). Positions 325–330 (TTAVDT) are G5 motif.

The protein belongs to the G-alpha family. In terms of assembly, g proteins are composed of 3 units; alpha, beta and gamma. The alpha chain contains the guanine nucleotide binding site.

Functionally, guanine nucleotide-binding proteins (G proteins) are involved as modulators or transducers in various transmembrane signaling systems. May play a role in resistance to fungal infection in the epidermis by regulating the up-regulation of several antimicrobial peptides of the NLP and CNC families. Upstream of plc-3, egl-8, tpa-1 and the p38-like pathway, required for the expression of antimicrobial peptide nlp-29 in the epidermis in response to fungal infection or physical injury. This Caenorhabditis briggsae protein is Guanine nucleotide-binding protein alpha-12 subunit (gpa-12).